A 267-amino-acid polypeptide reads, in one-letter code: Phosphonoacetaldehyde hydrolase (267 aa).

The Nucleophile role is filled by Asp-10. Mg(2+)-binding residues include Asp-10 and Ala-12. Lys-51 (schiff-base intermediate with substrate) is an active-site residue. Asp-184 contacts Mg(2+).

It belongs to the HAD-like hydrolase superfamily. PhnX family. Homodimer. Mg(2+) serves as cofactor.

The enzyme catalyses phosphonoacetaldehyde + H2O = acetaldehyde + phosphate + H(+). In terms of biological role, involved in phosphonate degradation. This is Phosphonoacetaldehyde hydrolase from Paraburkholderia phytofirmans (strain DSM 17436 / LMG 22146 / PsJN) (Burkholderia phytofirmans).